We begin with the raw amino-acid sequence, 285 residues long: MKTQMTRDNLATARTLSEALPYLQRFNDAVVVVKFGGNAMGDDAEMASFARDMVLLRQVGVNPVVVHGGGPMINDMLAKLGIESTFLNGKRVTDAATVDVVEMVLSGRVNKRIVQAINAQGGKAVGLSGKDANLITCVPADPELGFVGDPSQVDPSVINTLFEDDIIPVIAPLGQGAEGETYNINGDTAAGAIASALQADRLLLLTNVSGVKNAAGDVVTELTAADVDAMVADGTIAGGMIPKTETALQAVRTGVRACIIVDGRVPNAVLLELFTEHGAGSMIRA.

Residues 69 to 70, Arg-91, and Asn-183 contribute to the substrate site; that span reads GG.

This sequence belongs to the acetylglutamate kinase family. ArgB subfamily.

The protein localises to the cytoplasm. It catalyses the reaction N-acetyl-L-glutamate + ATP = N-acetyl-L-glutamyl 5-phosphate + ADP. It functions in the pathway amino-acid biosynthesis; L-arginine biosynthesis; N(2)-acetyl-L-ornithine from L-glutamate: step 2/4. Functionally, catalyzes the ATP-dependent phosphorylation of N-acetyl-L-glutamate. This Jannaschia sp. (strain CCS1) protein is Acetylglutamate kinase.